The primary structure comprises 299 residues: Leucine zipper transcription factor-like protein 1 (299 aa).

The interval 145 to 299 (GTTELLNKEI…KRLAKYESED (155 aa)) is interaction with BSS9. A coiled-coil region spans residues 145 to 299 (GTTELLNKEI…KRLAKYESED (155 aa)).

Belongs to the LZTFL1 family. Self-associates. Interacts with BBS9; the interaction mediates the association of LZTL1 with the BBsome complex and regulates BBSome ciliary trafficking.

The protein resides in the cytoplasm. Functionally, regulates ciliary localization of the BBSome complex. Together with the BBSome complex, controls SMO ciliary trafficking and contributes to the sonic hedgehog (SHH) pathway regulation. May play a role in neurite outgrowth. May have tumor suppressor function. In Rattus norvegicus (Rat), this protein is Leucine zipper transcription factor-like protein 1 (Lztfl1).